Here is a 469-residue protein sequence, read N- to C-terminus: MSSRTLYDKVWNFHQVKELPGGSTQLFIGLHLIHEVTSPQAFSALNEKKLGVKFPNLTVATVDHIVPTSNQQRPFSDPLAEEMLSTLEKNCKTHGIKFHGIGSNSQGVVHVMAPELGLTQPGMTVACGDSHTSTHGAFGAIAFGIGTSQVRDVLASQSLAMNKLKVRRIWVEGELQKGVYAKDLILHIIRHLGVKGGVGFAYEFAGPAIEKLSMEGRMTICNMAIEGGARCGYINPDETTFKYLKGKEHAPKGQEWDKAISWWKSLASDSKATFDDEIQLDGSSIEPTVTWGITPGQGISIKETIPNPEFLPKNEQQIAKDACKYMNLKPDEPIEGQSIDVCFIGSCTNGRLSDLQEASKIVKGNTVADGIRAFVVPGSQKVAKEAKEKGLDKIFLKAGFEWREPGCSMCLAMNPDKLEGRQISASSSNRNFKGRQGSAKGRTLLMSPAMVAAAAINGRVTDVRKFLQE.

Positions 347, 407, and 410 each coordinate [4Fe-4S] cluster.

This sequence belongs to the aconitase/IPM isomerase family. LeuC type 1 subfamily. Heterodimer of LeuC and LeuD. [4Fe-4S] cluster is required as a cofactor.

The catalysed reaction is (2R,3S)-3-isopropylmalate = (2S)-2-isopropylmalate. The protein operates within amino-acid biosynthesis; L-leucine biosynthesis; L-leucine from 3-methyl-2-oxobutanoate: step 2/4. In terms of biological role, catalyzes the isomerization between 2-isopropylmalate and 3-isopropylmalate, via the formation of 2-isopropylmaleate. The chain is 3-isopropylmalate dehydratase large subunit from Prochlorococcus marinus (strain NATL1A).